Consider the following 463-residue polypeptide: Annexin A7 (463 aa).

2 stretches are compositionally biased toward pro residues: residues 1–18 (MSYP…PGYP) and 26–38 (FPPP…PSGF). Disordered stretches follow at residues 1 to 54 (MSYP…SSGY) and 71 to 153 (GYPG…THGT). The interval 1 to 140 (MSYPGYPPTG…QYPGGQSPYP (140 aa)) is repeat-rich region. Residues 5–20 (GYPPTGYPPFPGYPPT) are 3 X 5 AA tandem repeats of G-Y-P-P-X. Positions 86-99 (GGQGFGAPPGGAGF) are enriched in gly residues. Annexin repeat units lie at residues 160 to 231 (FDAM…ALFM), 232 to 303 (PSTY…SMCQ), 315 to 387 (QLAQ…TILQ), and 391 to 462 (NRPA…AIVG). N6-acetyllysine is present on Lys-208.

This sequence belongs to the annexin family. Interacts with PDCD6.

Calcium/phospholipid-binding protein which promotes membrane fusion and is involved in exocytosis. This chain is Annexin A7 (ANXA7), found in Bos taurus (Bovine).